We begin with the raw amino-acid sequence, 110 residues long: Large ribosomal subunit protein uL22 (110 aa).

The protein belongs to the universal ribosomal protein uL22 family. In terms of assembly, part of the 50S ribosomal subunit.

In terms of biological role, this protein binds specifically to 23S rRNA; its binding is stimulated by other ribosomal proteins, e.g. L4, L17, and L20. It is important during the early stages of 50S assembly. It makes multiple contacts with different domains of the 23S rRNA in the assembled 50S subunit and ribosome. Functionally, the globular domain of the protein is located near the polypeptide exit tunnel on the outside of the subunit, while an extended beta-hairpin is found that lines the wall of the exit tunnel in the center of the 70S ribosome. The sequence is that of Large ribosomal subunit protein uL22 from Shewanella frigidimarina (strain NCIMB 400).